Here is a 362-residue protein sequence, read N- to C-terminus: Protein RecA (362 aa).

An ATP-binding site is contributed by 77 to 84 (GPESSGKT).

It belongs to the RecA family.

It is found in the cytoplasm. Functionally, can catalyze the hydrolysis of ATP in the presence of single-stranded DNA, the ATP-dependent uptake of single-stranded DNA by duplex DNA, and the ATP-dependent hybridization of homologous single-stranded DNAs. It interacts with LexA causing its activation and leading to its autocatalytic cleavage. The polypeptide is Protein RecA (Rhizobium etli (strain ATCC 51251 / DSM 11541 / JCM 21823 / NBRC 15573 / CFN 42)).